The following is a 369-amino-acid chain: Putative FAD-dependent oxidoreductase LodB (369 aa).

FAD-binding positions include 10–14 (GGGPA) and Arg-103.

The cofactor is FAD.

The protein resides in the cytoplasm. Functionally, is required for lysine-epsilon oxidase (LOD) activity in M.mediterranea. May be involved in the generation of the quinonic cofactor of LodA, leading to the active form of LodA containing a tyrosine-derived quinone cofactor. This Marinomonas mediterranea (strain ATCC 700492 / JCM 21426 / NBRC 103028 / MMB-1) protein is Putative FAD-dependent oxidoreductase LodB (lodB).